Consider the following 136-residue polypeptide: Putative LysR family substrate binding domain-containing protein YagP (136 aa).

The protein belongs to the LysR transcriptional regulatory family.

The polypeptide is Putative LysR family substrate binding domain-containing protein YagP (yagP) (Escherichia coli (strain K12)).